A 270-amino-acid chain; its full sequence is Ribitol operon repressor (270 aa).

The HTH lacI-type domain maps to methionine 1 to serine 61. The H-T-H motif DNA-binding region spans isoleucine 6 to asparagine 25.

Its function is as follows. Repressor for the genes of the ribitol operon. Binds D-ribulose as an inducer. In Klebsiella aerogenes (Enterobacter aerogenes), this protein is Ribitol operon repressor (rbtR).